A 124-amino-acid chain; its full sequence is Glucagon-1 (124 aa).

Positions 1 to 25 (MKRIHSLAGILLVLGLIQSSCRVLM) are cleaved as a signal peptide. The segment at 28-54 (ADPSSSLEADSTLKDEPRELSNMKRHS) is disordered. A compositionally biased stretch (basic and acidic residues) spans 38-54 (STLKDEPRELSNMKRHS). A propeptide spanning residues 84-88 (SGVAE) is cleaved from the precursor.

It belongs to the glucagon family.

It localises to the secreted. Glucagon plays a key role in glucose metabolism and homeostasis. Regulates blood glucose by increasing gluconeogenesis and decreasing glycolysis. This Lophius americanus (American angler) protein is Glucagon-1 (gcg1).